The chain runs to 600 residues: Probable tripeptidyl-peptidase SED4 (600 aa).

The signal sequence occupies residues 1 to 22 (MVSFTLRAIGACLIGLPALITA). Residues 23–202 (APTSHVSNDF…SVFTSDLEIT (180 aa)) constitute a propeptide, removed in mature form. N-linked (GlcNAc...) asparagine glycosylation is found at Asn210 and Asn281. A Peptidase S53 domain is found at 212 to 600 (TITPDCIREL…FEKLSKLVLI (389 aa)). Residues Glu288 and Asp292 each act as charge relay system in the active site. N-linked (GlcNAc...) asparagine glycans are attached at residues Asn323 and Asn404. Catalysis depends on Ser504, which acts as the Charge relay system. Ca(2+) contacts are provided by Asp546 and Ile547. Asn575 carries an N-linked (GlcNAc...) asparagine glycan. The Ca(2+) site is built by Gly579 and Asp581.

The cofactor is Ca(2+).

Its subcellular location is the secreted. The protein resides in the extracellular space. The enzyme catalyses Release of an N-terminal tripeptide from a polypeptide.. In terms of biological role, secreted tripeptidyl-peptidase which degrades proteins at acidic pHs and is involved in virulence. The chain is Probable tripeptidyl-peptidase SED4 (SED4) from Arthroderma benhamiae (strain ATCC MYA-4681 / CBS 112371) (Trichophyton mentagrophytes).